Reading from the N-terminus, the 485-residue chain is Probable glycine dehydrogenase (decarboxylating) subunit 2 (485 aa).

Lysine 273 carries the N6-(pyridoxal phosphate)lysine modification.

It belongs to the GcvP family. C-terminal subunit subfamily. In terms of assembly, the glycine cleavage system is composed of four proteins: P, T, L and H. In this organism, the P 'protein' is a heterodimer of two subunits. Pyridoxal 5'-phosphate serves as cofactor.

The catalysed reaction is N(6)-[(R)-lipoyl]-L-lysyl-[glycine-cleavage complex H protein] + glycine + H(+) = N(6)-[(R)-S(8)-aminomethyldihydrolipoyl]-L-lysyl-[glycine-cleavage complex H protein] + CO2. Functionally, the glycine cleavage system catalyzes the degradation of glycine. The P protein binds the alpha-amino group of glycine through its pyridoxal phosphate cofactor; CO(2) is released and the remaining methylamine moiety is then transferred to the lipoamide cofactor of the H protein. This chain is Probable glycine dehydrogenase (decarboxylating) subunit 2, found in Oceanobacillus iheyensis (strain DSM 14371 / CIP 107618 / JCM 11309 / KCTC 3954 / HTE831).